A 251-amino-acid chain; its full sequence is Flap endonuclease Xni (251 aa).

D104 lines the Mg(2+) pocket. In terms of domain architecture, 5'-3' exonuclease spans V160 to K250. Residues L171, A172, P180, V182, and I185 each contribute to the K(+) site. Positions G184–S189 are interaction with DNA.

The protein belongs to the Xni family. Requires Mg(2+) as cofactor. It depends on K(+) as a cofactor.

In terms of biological role, has flap endonuclease activity. During DNA replication, flap endonucleases cleave the 5'-overhanging flap structure that is generated by displacement synthesis when DNA polymerase encounters the 5'-end of a downstream Okazaki fragment. In Escherichia fergusonii (strain ATCC 35469 / DSM 13698 / CCUG 18766 / IAM 14443 / JCM 21226 / LMG 7866 / NBRC 102419 / NCTC 12128 / CDC 0568-73), this protein is Flap endonuclease Xni.